The following is a 497-amino-acid chain: ATP synthase subunit alpha 2 (497 aa).

Residue 167 to 174 (GERATGKT) coordinates ATP.

This sequence belongs to the ATPase alpha/beta chains family. In terms of assembly, F-type ATPases have 2 components, CF(1) - the catalytic core - and CF(0) - the membrane proton channel. CF(1) has five subunits: alpha(3), beta(3), gamma(1), delta(1), epsilon(1). CF(0) has four main subunits: a(1), b(1), b'(1) and c(9-12).

It is found in the cell inner membrane. It carries out the reaction ATP + H2O + 4 H(+)(in) = ADP + phosphate + 5 H(+)(out). Produces ATP from ADP in the presence of a proton gradient across the membrane. The alpha chain is a regulatory subunit. This Cereibacter sphaeroides (strain ATCC 17023 / DSM 158 / JCM 6121 / CCUG 31486 / LMG 2827 / NBRC 12203 / NCIMB 8253 / ATH 2.4.1.) (Rhodobacter sphaeroides) protein is ATP synthase subunit alpha 2.